The primary structure comprises 139 residues: Proline-rich protein 13 (139 aa).

The tract at residues 1-139 (MWNPSAGPNP…SSSSSSSDSD (139 aa)) is disordered. 2 stretches are compositionally biased toward pro residues: residues 24–62 (ACPP…PQPG) and 70–91 (GPYP…PPAP). Residues 103–124 (KTRKKMKKAHKKSHKHHKHGKH) show a composition bias toward basic residues. Residues 125–139 (SSSSSSSSSSSSDSD) are compositionally biased toward low complexity.

Its subcellular location is the nucleus. Its function is as follows. Negatively regulates TSP1 expression at the level of transcription. This down-regulation was shown to reduce taxane-induced apoptosis. This chain is Proline-rich protein 13 (Prr13), found in Rattus norvegicus (Rat).